The primary structure comprises 606 residues: Endonuclease 8-like 3 (606 aa).

The Schiff-base intermediate with DNA; via amino nitrogen role is filled by V2. The DNA site is built by N193 and R272. The segment at 248–282 (KVYKRPNCDQCHSKITVCRFGENSRMTYFCPHCQK) adopts an FPG-type zinc-finger fold. The segment at 318–347 (SEEQWSCVVCTLINRPSAKACDACLTTRPL) adopts a RanBP2-type zinc-finger fold. S451 carries the post-translational modification Phosphoserine. The span at 479-494 (KSYNSGLSNSELQTNR) shows a compositional bias: polar residues. Residues 479–506 (KSYNSGLSNSELQTNRTRGHHSKSDGSP) form a disordered region. 8 residues coordinate Zn(2+): C508, H511, C534, C542, C555, H557, C580, and C588. 2 consecutive GRF-type zinc fingers follow at residues 508–551 (CKMH…ADLS) and 555–597 (CRHG…AENG).

The protein belongs to the FPG family. In terms of tissue distribution, expressed in testis, thymus, spleen and bone marrow. In young mice, expressed at higher levels in thymocytes than splenocytes. At 12 dpc, abundant in the subventricular zone (SVZ) of the lateral ventricles. At 17.5 dpc and P0, expression is limited to distinct cells in the cortical SVZ, in cells of the secondary matrix, the dentate gyrus migratory route and the dentate gyrus.

The protein localises to the nucleus. Its subcellular location is the chromosome. It catalyses the reaction 2'-deoxyribonucleotide-(2'-deoxyribose 5'-phosphate)-2'-deoxyribonucleotide-DNA = a 3'-end 2'-deoxyribonucleotide-(2,3-dehydro-2,3-deoxyribose 5'-phosphate)-DNA + a 5'-end 5'-phospho-2'-deoxyribonucleoside-DNA + H(+). Functionally, DNA glycosylase which prefers single-stranded DNA (ssDNA), or partially ssDNA structures such as bubble and fork structures, to double-stranded DNA (dsDNA). Mediates interstrand cross-link repair in response to replication stress: acts by mediating DNA glycosylase activity, cleaving one of the two N-glycosyl bonds comprising the interstrand cross-link, which avoids the formation of a double-strand break but generates an abasic site that is bypassed by translesion synthesis polymerases. In vitro, displays strong glycosylase activity towards the hydantoin lesions spiroiminodihydantoin (Sp) and guanidinohydantoin (Gh) in both ssDNA and dsDNA; also recognizes FapyA, FapyG, 5-OHU, 5-OHC, 5-OHMH, Tg and 8-oxoA lesions in ssDNA. No activity on 8-oxoG detected. Also shows weak DNA-(apurinic or apyrimidinic site) lyase activity. In vivo, appears to be the primary enzyme involved in removing Sp and Gh from ssDNA in neonatal tissues. This is Endonuclease 8-like 3 (Neil3) from Mus musculus (Mouse).